A 145-amino-acid chain; its full sequence is Histone H2B.7 (145 aa).

Residues 1–30 (MAPKAEKKPAEKKPVEEKSKAEKAPAEKKP) show a composition bias toward basic and acidic residues. The tract at residues 1-53 (MAPKAEKKPAEKKPVEEKSKAEKAPAEKKPKAGKKLPKEAGAGGDKKKKMKKK) is disordered. A2 carries the n,N,N-trimethylalanine; alternate modification. A2 carries the post-translational modification N,N-dimethylalanine; alternate. The residue at position 2 (A2) is an N-methylalanine; alternate. The residue at position 4 (K4) is an N6-methyllysine; partial. K7 and K12 each carry N6-acetyllysine. An N6,N6-dimethyllysine modification is found at K13. N6-acetyllysine occurs at positions 23, 28, and 34. Residue K35 is modified to N6-acetyllysine; partial. Residue K141 forms a Glycyl lysine isopeptide (Lys-Gly) (interchain with G-Cter in ubiquitin) linkage.

The protein belongs to the histone H2B family. The nucleosome is a histone octamer containing two molecules each of H2A, H2B, H3 and H4 assembled in one H3-H4 heterotetramer and two H2A-H2B heterodimers. The octamer wraps approximately 147 bp of DNA. Can be acetylated to form H2BK6ac, H2BK11ac, H2BK22ac, H2BK27ac H2BK33ac and H2BK34ac. Post-translationally, mono-, di- or trimethylated at the N-terminus to form H2BA1me1/2/3. H2BA1me2 and H2BA1me3 may be methylated and/or acetylated to form H2BA1me2K3me1, H2BA1me2K3me1K6ac, H2BA1me2K6ac H2BA1me3K6ac, H2BA1me3K6acK11ac and H2BA1me2K3me1K6acK11ac. In terms of processing, monoubiquitinated by BRE1 to form H2BK143ub1 and deubiquitinated by UBP26. Required for heterochromatic histone H3 di- and trimethylation at H3K4me. May give a specific tag for epigenetic transcriptional activation.

The protein resides in the nucleus. It is found in the chromosome. In terms of biological role, core component of nucleosome. Nucleosomes wrap and compact DNA into chromatin, limiting DNA accessibility to the cellular machineries which require DNA as a template. Histones thereby play a central role in transcription regulation, DNA repair, DNA replication and chromosomal stability. DNA accessibility is regulated via a complex set of post-translational modifications of histones, also called histone code, and nucleosome remodeling. The polypeptide is Histone H2B.7 (Arabidopsis thaliana (Mouse-ear cress)).